Consider the following 370-residue polypeptide: Glutamate 5-kinase (370 aa).

K17 is a binding site for ATP. Substrate contacts are provided by S56, D143, and N155. 175-176 (SD) lines the ATP pocket. Residues 280–357 (RGTIRVDAGA…AEIVAILGYS (78 aa)) enclose the PUA domain.

The protein belongs to the glutamate 5-kinase family.

Its subcellular location is the cytoplasm. It carries out the reaction L-glutamate + ATP = L-glutamyl 5-phosphate + ADP. It functions in the pathway amino-acid biosynthesis; L-proline biosynthesis; L-glutamate 5-semialdehyde from L-glutamate: step 1/2. Functionally, catalyzes the transfer of a phosphate group to glutamate to form L-glutamate 5-phosphate. This chain is Glutamate 5-kinase, found in Cereibacter sphaeroides (strain ATCC 17023 / DSM 158 / JCM 6121 / CCUG 31486 / LMG 2827 / NBRC 12203 / NCIMB 8253 / ATH 2.4.1.) (Rhodobacter sphaeroides).